The following is a 257-amino-acid chain: Dihydroorotate dehydrogenase B (NAD(+)), electron transfer subunit (257 aa).

One can recognise an FAD-binding FR-type domain in the interval 2 to 102; sequence IGRERMTVAS…LGPLGNGFPL (101 aa). FAD is bound by residues 53–56, 70–72, and 77–78; these read RPLS, IYR, and GT. The [2Fe-2S] cluster site is built by C221, C226, C229, and C244.

This sequence belongs to the PyrK family. Heterotetramer of 2 PyrK and 2 PyrD type B subunits. It depends on [2Fe-2S] cluster as a cofactor. FAD serves as cofactor.

Its pathway is pyrimidine metabolism; UMP biosynthesis via de novo pathway; orotate from (S)-dihydroorotate (NAD(+) route): step 1/1. Functionally, responsible for channeling the electrons from the oxidation of dihydroorotate from the FMN redox center in the PyrD type B subunit to the ultimate electron acceptor NAD(+). The sequence is that of Dihydroorotate dehydrogenase B (NAD(+)), electron transfer subunit from Geobacillus kaustophilus (strain HTA426).